A 338-amino-acid chain; its full sequence is Limbic system-associated membrane protein (338 aa).

The first 28 residues, 1–28 (MVGRVQPDRKQLPLVLLRLLCLLPTGLP), serve as a signal peptide directing secretion. Ig-like C2-type domains follow at residues 29 to 122 (VRSV…PKTS), 132 to 214 (PKIS…VKVT), and 219 to 304 (PTIT…ASLV). 2 N-linked (GlcNAc...) asparagine glycosylation sites follow: N40 and N66. Residues C53 and C111 are joined by a disulfide bond. Y94 is modified (phosphotyrosine). N-linked (GlcNAc...) asparagine glycans are attached at residues N136 and N148. 2 disulfide bridges follow: C153–C197 and C239–C290. N-linked (GlcNAc...) asparagine glycosylation is found at N279, N287, and N300. A lipid anchor (GPI-anchor amidated asparagine; alternate) is attached at N315. N-linked (GlcNAc...) asparagine; alternate glycosylation occurs at N315. Positions 316-338 (GSISLAVPLWLLAASLFCLLSKC) are cleaved as a propeptide — removed in mature form.

It belongs to the immunoglobulin superfamily. IgLON family. Expressed mostly by neurons comprising limbic-associated cortical and subcortical regions that function in cognition, emotion, memory, and learning.

It is found in the cell membrane. Functionally, mediates selective neuronal growth and axon targeting. Contributes to the guidance of developing axons and remodeling of mature circuits in the limbic system. Essential for normal growth of the hippocampal mossy fiber projection. In Rattus norvegicus (Rat), this protein is Limbic system-associated membrane protein (Lsamp).